Here is a 101-residue protein sequence, read N- to C-terminus: Small ribosomal subunit protein bS18c (101 aa).

The span at 1–19 (MDKSKQPFHKTKRSFRRRL) shows a compositional bias: basic residues. The segment at 1 to 23 (MDKSKQPFHKTKRSFRRRLPPIG) is disordered.

Belongs to the bacterial ribosomal protein bS18 family. As to quaternary structure, part of the 30S ribosomal subunit.

It localises to the plastid. Its subcellular location is the chloroplast. This is Small ribosomal subunit protein bS18c from Lemna minor (Common duckweed).